The sequence spans 816 residues: Molybdenum cofactor sulfurase (816 aa).

Lys-273 bears the N6-(pyridoxal phosphate)lysine mark. Cys-427 is an active-site residue. Residues 647–812 (NSDSQSHSCI…IRVGEEIIPN (166 aa)) enclose the MOSC domain.

It belongs to the class-V pyridoxal-phosphate-dependent aminotransferase family. MOCOS subfamily. It depends on pyridoxal 5'-phosphate as a cofactor. In terms of tissue distribution, ubiquitously expressed.

The catalysed reaction is Mo-molybdopterin + L-cysteine + AH2 = thio-Mo-molybdopterin + L-alanine + A + H2O. It participates in cofactor biosynthesis; molybdopterin biosynthesis. Functionally, sulfurates the molybdenum cofactor. Sulfation of molybdenum is essential for xanthine dehydrogenase (XDH) and aldehyde oxidase (ADO) enzymes in which molybdenum cofactor is liganded by 1 oxygen and 1 sulfur atom in active form. The protein is Molybdenum cofactor sulfurase (FLACCA) of Solanum lycopersicum (Tomato).